The chain runs to 181 residues: Large ribosomal subunit protein eL18 (181 aa).

The disordered stretch occupies residues 152-181 (WGKAPGQRGSHSAPYVRSEGRKFERAHGLK). Residues 169-181 (SEGRKFERAHGLK) show a composition bias toward basic and acidic residues.

The protein belongs to the eukaryotic ribosomal protein eL18 family.

It localises to the cytoplasm. This Tetrahymena thermophila protein is Large ribosomal subunit protein eL18 (RPL18).